Consider the following 82-residue polypeptide: ATP synthase subunit c (82 aa).

Transmembrane regions (helical) follow at residues 3-23 (PLIASASVLAAALAIGLASLG) and 57-77 (LAFMESLTIYGLVIALVLLFA).

In terms of assembly, F-type ATPases have 2 components, F(1) - the catalytic core - and F(0) - the membrane proton channel. F(1) has five subunits: alpha(3), beta(3), gamma(1), delta(1), epsilon(1). F(0) has four main subunits: a(1), b(1), b'(1) and c(10-14). The alpha and beta chains form an alternating ring which encloses part of the gamma chain. F(1) is attached to F(0) by a central stalk formed by the gamma and epsilon chains, while a peripheral stalk is formed by the delta, b and b' chains.

The protein localises to the cellular thylakoid membrane. Inhibited by dicyclohexylcarbodiimide. F(1)F(0) ATP synthase produces ATP from ADP in the presence of a proton or sodium gradient. F-type ATPases consist of two structural domains, F(1) containing the extramembraneous catalytic core and F(0) containing the membrane proton channel, linked together by a central stalk and a peripheral stalk. During catalysis, ATP synthesis in the catalytic domain of F(1) is coupled via a rotary mechanism of the central stalk subunits to proton translocation. Its function is as follows. Key component of the F(0) channel; it plays a direct role in translocation across the membrane. A homomeric c-ring of between 10-14 subunits forms the central stalk rotor element with the F(1) delta and epsilon subunits. Functionally, the complex from the organism is particularly stable to disruption and remains functional after 6 hrs at 55 degrees Celsius. The protein is ATP synthase subunit c (atpE) of Thermosynechococcus vestitus (strain NIES-2133 / IAM M-273 / BP-1).